The following is a 51-amino-acid chain: Sperm protamine P1 (51 aa).

Belongs to the protamine P1 family. As to expression, testis.

Its subcellular location is the nucleus. The protein resides in the chromosome. Functionally, protamines substitute for histones in the chromatin of sperm during the haploid phase of spermatogenesis. They compact sperm DNA into a highly condensed, stable and inactive complex. The polypeptide is Sperm protamine P1 (PRM1) (Trachypithecus francoisi (Francois' leaf monkey)).